The chain runs to 276 residues: Large ribosomal subunit protein uL2 (276 aa).

Disordered regions lie at residues Ala-35–Gly-55 and Gly-222–Lys-276. Residues Lys-258 to Lys-276 show a composition bias toward basic residues.

Belongs to the universal ribosomal protein uL2 family. As to quaternary structure, part of the 50S ribosomal subunit. Forms a bridge to the 30S subunit in the 70S ribosome.

Its function is as follows. One of the primary rRNA binding proteins. Required for association of the 30S and 50S subunits to form the 70S ribosome, for tRNA binding and peptide bond formation. It has been suggested to have peptidyltransferase activity; this is somewhat controversial. Makes several contacts with the 16S rRNA in the 70S ribosome. This chain is Large ribosomal subunit protein uL2, found in Shouchella clausii (strain KSM-K16) (Alkalihalobacillus clausii).